The chain runs to 196 residues: Protein GrpE (196 aa).

The interval 1–39 (MSSKEQKTPEGQAPEEIIMDQHEEIEAVEPEASAEQVDP) is disordered.

This sequence belongs to the GrpE family. Homodimer.

The protein localises to the cytoplasm. In terms of biological role, participates actively in the response to hyperosmotic and heat shock by preventing the aggregation of stress-denatured proteins, in association with DnaK and GrpE. It is the nucleotide exchange factor for DnaK and may function as a thermosensor. Unfolded proteins bind initially to DnaJ; upon interaction with the DnaJ-bound protein, DnaK hydrolyzes its bound ATP, resulting in the formation of a stable complex. GrpE releases ADP from DnaK; ATP binding to DnaK triggers the release of the substrate protein, thus completing the reaction cycle. Several rounds of ATP-dependent interactions between DnaJ, DnaK and GrpE are required for fully efficient folding. In Escherichia coli O139:H28 (strain E24377A / ETEC), this protein is Protein GrpE.